The sequence spans 570 residues: Periplasmic trehalase (570 aa).

An N-terminal signal peptide occupies residues 1–34 (MIPPEIRRSVLLQKAIKLALAGTLLTFASFSATA). Substrate is bound by residues R159, 166–167 (WD), N203, 212–214 (RSQ), 284–286 (RPE), and G317. Active-site proton donor/acceptor residues include D319 and E503. E518 serves as a coordination point for substrate. The disordered stretch occupies residues 544-570 (KPCDSVPSTRPASLSATPTKTPSAATQ). A compositionally biased stretch (low complexity) spans 554-570 (PASLSATPTKTPSAATQ).

It belongs to the glycosyl hydrolase 37 family. Monomer.

The protein resides in the periplasm. It carries out the reaction alpha,alpha-trehalose + H2O = alpha-D-glucose + beta-D-glucose. In terms of biological role, provides the cells with the ability to utilize trehalose at high osmolarity by splitting it into glucose molecules that can subsequently be taken up by the phosphotransferase-mediated uptake system. This is Periplasmic trehalase from Salmonella choleraesuis (strain SC-B67).